We begin with the raw amino-acid sequence, 281 residues long: Elongation factor 1-delta (281 aa).

Ala-2 is subject to N-acetylalanine. The residue at position 17 (Lys-17) is an N6-acetyllysine. A phosphoserine mark is found at Ser-37, Ser-44, Ser-60, Ser-86, and Ser-106. The interval Leu-80 to Leu-115 is leucine-zipper. Lys-107 is subject to N6-acetyllysine. The segment covering Leu-115–Val-132 has biased composition (polar residues). Residues Leu-115 to Ala-172 are disordered. Lys-117 carries the post-translational modification N6-acetyllysine; alternate. Lys-117 is subject to N6-succinyllysine; alternate. Ser-119 carries the phosphoserine modification. A Phosphothreonine modification is found at Thr-129. Residue Ser-133 is modified to Phosphoserine. Thr-147 bears the Phosphothreonine mark. Positions Ala-149–Lys-169 are enriched in acidic residues. Ser-162 carries the post-translational modification Phosphoserine; by CK2. Residues Arg-173–Ile-281 are catalytic (GEF).

The protein belongs to the EF-1-beta/EF-1-delta family. As to quaternary structure, EF-1 is composed of 4 subunits: alpha, beta, delta isoform 1, and gamma. Isoform 2 interacts with HSF1 and NFE2L2.

The protein resides in the nucleus. In terms of biological role, EF-1-beta and EF-1-delta stimulate the exchange of GDP bound to EF-1-alpha to GTP, regenerating EF-1-alpha for another round of transfer of aminoacyl-tRNAs to the ribosome. Functionally, regulates induction of heat-shock-responsive genes through association with heat shock transcription factors and direct DNA-binding at heat shock promoter elements (HSE). The chain is Elongation factor 1-delta (Eef1d) from Rattus norvegicus (Rat).